A 505-amino-acid chain; its full sequence is Aspartyl/glutamyl-tRNA(Asn/Gln) amidotransferase subunit B (505 aa).

The protein belongs to the GatB/GatE family. GatB subfamily. In terms of assembly, heterotrimer of A, B and C subunits.

The catalysed reaction is L-glutamyl-tRNA(Gln) + L-glutamine + ATP + H2O = L-glutaminyl-tRNA(Gln) + L-glutamate + ADP + phosphate + H(+). It carries out the reaction L-aspartyl-tRNA(Asn) + L-glutamine + ATP + H2O = L-asparaginyl-tRNA(Asn) + L-glutamate + ADP + phosphate + 2 H(+). Allows the formation of correctly charged Asn-tRNA(Asn) or Gln-tRNA(Gln) through the transamidation of misacylated Asp-tRNA(Asn) or Glu-tRNA(Gln) in organisms which lack either or both of asparaginyl-tRNA or glutaminyl-tRNA synthetases. The reaction takes place in the presence of glutamine and ATP through an activated phospho-Asp-tRNA(Asn) or phospho-Glu-tRNA(Gln). In Streptomyces avermitilis (strain ATCC 31267 / DSM 46492 / JCM 5070 / NBRC 14893 / NCIMB 12804 / NRRL 8165 / MA-4680), this protein is Aspartyl/glutamyl-tRNA(Asn/Gln) amidotransferase subunit B.